The chain runs to 67 residues: Medusin-H1 (67 aa).

The signal sequence occupies residues M1–C22. The propeptide occupies E23 to R48. Residues E24 to E46 are disordered. Over residues E31–R40 the composition is skewed to acidic residues. Residue L66 is modified to Leucine amide.

Belongs to the frog skin active peptide (FSAP) family. Medusin subfamily. As to expression, expressed by the skin glands.

It is found in the secreted. Functionally, antimicrobial peptide with activity against Gram-positive bacteria (S.aureus, MIC=32 mg/L) and fungi (C.albicans, MIC=128 mg/L). Shows weak hemolytic activity. The sequence is that of Medusin-H1 from Pithecopus hypochondrialis (Orange-legged leaf frog).